We begin with the raw amino-acid sequence, 297 residues long: Glucuronoxylan 4-O-methyltransferase 3 (297 aa).

Residues Leu9 to Ala29 form a helical membrane-spanning segment. Residues Ser35 to Ser47 are compositionally biased toward low complexity. Residues Ser35 to Thr63 are disordered.

The protein belongs to the methyltransferase superfamily. Expressed in hypocotyls, roots, rosette leaves, stems and siliques.

It localises to the golgi apparatus membrane. It carries out the reaction glucuronoxylan D-glucuronate + n S-adenosyl-L-methionine = glucuronoxylan 4-O-methyl-D-glucuronate + n S-adenosyl-L-homocysteine + n H(+). Its function is as follows. Methyltransferase catalyzing 4-O-methylation of glucuronic acid side chains on xylan. The chain is Glucuronoxylan 4-O-methyltransferase 3 (GXM3) from Arabidopsis thaliana (Mouse-ear cress).